The following is a 398-amino-acid chain: MISDLESLGIDFKDEGENYVPKKDYSGNLVAKYVFDSNGISTDNITLKDLSGHGYDGTMSGVSIKDDSELGKCAYFNGSASVNFNNQIIPKGNKTIIITFKKDSGTQSNGQYEFLIEQGSGQGESITSWSIRFDSYKTACLNNLYFCNDDSKINMLNSHPAVFNVCDGKKHTAIFNYYDNKTNNTYCDSLKAHVCSFDFNGGEYRTADNSIIGQKYVGYIKSIEIYDDVVEFNSISTGTSLNKNIDQLIIGQTDNLVATIMPEDVTDKSVIWSSSDPSIVAVDENGKITALKVGEVSITVTTNDGSNLSQTCMVAVIDTTIPDKACLNISMTNGQVKQYYVGMDLVNKFISWYKLRSAGSEEPFYEFDITQLSEPGILRHDYVVFNKISSFTVDDYVK.

The region spanning 240 to 306 is the BIG2 domain; the sequence is SLNKNIDQLI…SITVTTNDGS (67 aa).

This is an uncharacterized protein from Clostridium acetobutylicum (strain ATCC 824 / DSM 792 / JCM 1419 / IAM 19013 / LMG 5710 / NBRC 13948 / NRRL B-527 / VKM B-1787 / 2291 / W).